Reading from the N-terminus, the 294-residue chain is Nucleotide-binding protein Smal_0950 (294 aa).

16-23 (GLSGSGKS) lines the ATP pocket. A GTP-binding site is contributed by 69-72 (DVRG).

The protein belongs to the RapZ-like family.

Displays ATPase and GTPase activities. In Stenotrophomonas maltophilia (strain R551-3), this protein is Nucleotide-binding protein Smal_0950.